Here is a 133-residue protein sequence, read N- to C-terminus: Fatty acid-binding protein, heart (133 aa).

Valine 2 is subject to N-acetylvaline. Residue threonine 8 is modified to Phosphothreonine. Tyrosine 20 is modified (phosphotyrosine; by Tyr-kinases). Serine 23 is modified (phosphoserine). Position 30 is a phosphothreonine (threonine 30). Residue serine 83 is modified to Phosphoserine. 127–129 (RTY) contributes to the (9Z)-octadecenoate binding site. 127–129 (RTY) is a binding site for hexadecanoate. 127–129 (RTY) provides a ligand contact to octadecanoate.

Belongs to the calycin superfamily. Fatty-acid binding protein (FABP) family.

It is found in the cytoplasm. Functionally, FABPs are thought to play a role in the intracellular transport of long-chain fatty acids and their acyl-CoA esters. The sequence is that of Fatty acid-binding protein, heart (FABP3) from Bos mutus grunniens (Wild yak).